The sequence spans 203 residues: ATP-dependent Clp protease proteolytic subunit (203 aa).

Ser107 functions as the Nucleophile in the catalytic mechanism. Residue His132 is part of the active site.

Belongs to the peptidase S14 family. Fourteen ClpP subunits assemble into 2 heptameric rings which stack back to back to give a disk-like structure with a central cavity, resembling the structure of eukaryotic proteasomes.

It is found in the cytoplasm. It catalyses the reaction Hydrolysis of proteins to small peptides in the presence of ATP and magnesium. alpha-casein is the usual test substrate. In the absence of ATP, only oligopeptides shorter than five residues are hydrolyzed (such as succinyl-Leu-Tyr-|-NHMec, and Leu-Tyr-Leu-|-Tyr-Trp, in which cleavage of the -Tyr-|-Leu- and -Tyr-|-Trp bonds also occurs).. In terms of biological role, cleaves peptides in various proteins in a process that requires ATP hydrolysis. Has a chymotrypsin-like activity. Plays a major role in the degradation of misfolded proteins. This Shewanella woodyi (strain ATCC 51908 / MS32) protein is ATP-dependent Clp protease proteolytic subunit.